Here is a 386-residue protein sequence, read N- to C-terminus: Cytotoxic granule associated RNA binding protein TIA1 (386 aa).

Position 1 is an N-acetylmethionine (methionine 1). 3 RRM domains span residues 7 to 83 (KTLY…WATT), 106 to 184 (FHVF…WATR), and 214 to 286 (CTVY…WGKE). The interval 355-376 (GPNYSVPPPQGQNGSMLPSQPA) is disordered.

In terms of assembly, homooligomer; homooligomerization is induced by Zn(2+). Interacts with FASTK; the interactions leads to its phosphorylation. Interacts (via RRM1 and the C-terminal glutamine-rich (Q) sequence) with SNRPC/U1-C (via N-terminus); thereby facilitating spliceosomal U1 snRNP recruitment to 5' splice sites. Phosphorylatedby FASTK; phosphorylation occurs after FAS ligation in FAS-mediated apoptosis and before DNA fragmentation.

It localises to the nucleus. The protein localises to the cytoplasm. The protein resides in the stress granule. In terms of biological role, RNA-binding protein involved in the regulation of alternative pre-RNA splicing and mRNA translation by binding to uridine-rich (U-rich) RNA sequences. Binds to U-rich sequences immediately downstream from a 5' splice sites in a uridine-rich small nuclear ribonucleoprotein (U snRNP)-dependent fashion, thereby modulating alternative pre-RNA splicing. Preferably binds to the U-rich IAS1 sequence in a U1 snRNP-dependent manner; this binding is optimal if a 5' splice site is adjacent to IAS1. Activates the use of heterologous 5' splice sites; the activation depends on the intron sequence downstream from the 5' splice site, with a preference for a downstream U-rich sequence. By interacting with SNRPC/U1-C, promotes recruitment and binding of spliceosomal U1 snRNP to 5' splice sites followed by U-rich sequences, thereby facilitating atypical 5' splice site recognition by U1 snRNP. Activates splicing of alternative exons with weak 5' splice sites followed by a U-rich stretch on its own pre-mRNA and on TIAR mRNA. Acts as a modulator of alternative splicing for the apoptotic FAS receptor, thereby promoting apoptosis. Binds to the 5' splice site region of FAS intron 5 to promote accumulation of transcripts that include exon 6 at the expense of transcripts in which exon 6 is skipped, thereby leading to the transcription of a membrane-bound apoptotic FAS receptor, which promotes apoptosis. Binds to a conserved AU-rich cis element in COL2A1 intron 2 and modulates alternative splicing of COL2A1 exon 2. Also binds to the equivalent AT-rich element in COL2A1 genomic DNA, and may thereby be involved in the regulation of transcription. Involved in the repression of mRNA translation by binding to AU-rich elements (AREs) located in mRNA 3' untranslated regions (3' UTRs), including target ARE-bearing mRNAs encoding TNF and PTGS2. Also participates in the cellular response to environmental stress, by acting downstream of the stress-induced phosphorylation of EIF2S1/EIF2A to promote the recruitment of untranslated mRNAs to cytoplasmic stress granules (SGs), leading to stress-induced translational arrest. Formation and recruitment to SGs is regulated by Zn(2+). Possesses nucleolytic activity against cytotoxic lymphocyte target cells. The polypeptide is Cytotoxic granule associated RNA binding protein TIA1 (Tia1) (Mus musculus (Mouse)).